A 574-amino-acid polypeptide reads, in one-letter code: ATP-dependent lipid A-core flippase (574 aa).

The next 4 helical transmembrane spans lie at 11–31 (LLSY…GFGI), 60–80 (WFPL…FMGG), 156–176 (YTNW…GVLV), and 244–264 (LNSP…VWLA). The 282-residue stretch at 23–304 (LLVLVGFGIN…LTDVNEKLQR (282 aa)) folds into the ABC transmembrane type-1 domain. Residues 335–570 (VRFDHVTLEY…QGAYFQLHQR (236 aa)) enclose the ABC transporter domain. 368–375 (GRSGAGKT) serves as a coordination point for ATP.

Belongs to the ABC transporter superfamily. Lipid exporter (TC 3.A.1.106) family. As to quaternary structure, homodimer.

It localises to the cell inner membrane. It carries out the reaction ATP + H2O + lipid A-core oligosaccharideSide 1 = ADP + phosphate + lipid A-core oligosaccharideSide 2.. Its function is as follows. Involved in lipopolysaccharide (LPS) biosynthesis. Translocates lipid A-core from the inner to the outer leaflet of the inner membrane. Transmembrane domains (TMD) form a pore in the inner membrane and the ATP-binding domain (NBD) is responsible for energy generation. The polypeptide is ATP-dependent lipid A-core flippase (Acinetobacter baylyi (strain ATCC 33305 / BD413 / ADP1)).